A 354-amino-acid chain; its full sequence is MIKRRKTREITLGTLKIGGNNPIVVQSMTSTKTHDIEATISQIDRLIKAGCEAIRVAVPAKEDAEALKEIVKYSEVPIIADIHFVPYMAFLSMEAGAHGIRINPGNINKKEIVRDIVLEAKKRNICVRLGVNSGSLEKHLLEKYGYPSAEALAESALNWSEFFESLGFYNFKVSIKGSDVIQNALANEIFAEKTDTPLHIGITEAGMGTQGIVKSSVGLGILLYKGIGDTIRVSLTDEPEKEVEVAYEILKSLGLKKKGIDIVSCPTCGRIEVNLPNVVKQVQEALKDKDLSIKVAIMGCAVNAIGEASHADVGLACMKGGALLFKNGKILKKVTEENMVSELLETIEKYYQEV.

The [4Fe-4S] cluster site is built by Cys-265, Cys-268, Cys-300, and Glu-307.

Belongs to the IspG family. It depends on [4Fe-4S] cluster as a cofactor.

The catalysed reaction is (2E)-4-hydroxy-3-methylbut-2-enyl diphosphate + oxidized [flavodoxin] + H2O + 2 H(+) = 2-C-methyl-D-erythritol 2,4-cyclic diphosphate + reduced [flavodoxin]. The protein operates within isoprenoid biosynthesis; isopentenyl diphosphate biosynthesis via DXP pathway; isopentenyl diphosphate from 1-deoxy-D-xylulose 5-phosphate: step 5/6. Its function is as follows. Converts 2C-methyl-D-erythritol 2,4-cyclodiphosphate (ME-2,4cPP) into 1-hydroxy-2-methyl-2-(E)-butenyl 4-diphosphate. The protein is 4-hydroxy-3-methylbut-2-en-1-yl diphosphate synthase (flavodoxin) of Hydrogenobaculum sp. (strain Y04AAS1).